The sequence spans 238 residues: Ribonuclease PH (238 aa).

Residues Arg86 and 124 to 126 contribute to the phosphate site; that span reads GTR.

The protein belongs to the RNase PH family. In terms of assembly, homohexameric ring arranged as a trimer of dimers.

It carries out the reaction tRNA(n+1) + phosphate = tRNA(n) + a ribonucleoside 5'-diphosphate. Its function is as follows. Phosphorolytic 3'-5' exoribonuclease that plays an important role in tRNA 3'-end maturation. Removes nucleotide residues following the 3'-CCA terminus of tRNAs; can also add nucleotides to the ends of RNA molecules by using nucleoside diphosphates as substrates, but this may not be physiologically important. Probably plays a role in initiation of 16S rRNA degradation (leading to ribosome degradation) during starvation. This chain is Ribonuclease PH, found in Salmonella agona (strain SL483).